Reading from the N-terminus, the 327-residue chain is Metal-binding protein YtgA (327 aa).

The N-terminal stretch at 1–20 (MDAKMGYIFKVMRWIFCFVA) is a signal peptide. Fe(2+)-binding residues include His73, His139, His205, and Asp297.

This sequence belongs to the bacterial solute-binding protein 9 family. As to quaternary structure, monomer.

The protein localises to the periplasm. In terms of biological role, part of the ATP-binding cassette (ABC) transport system YtgABCD involved in metal import. Binds Fe(2+), Mn(2+) and Ni(2+), with a preference for Fe(2+) and delivers them to the membrane permease for translocation into the cytoplasm. The chain is Metal-binding protein YtgA from Chlamydia pneumoniae (Chlamydophila pneumoniae).